A 226-amino-acid polypeptide reads, in one-letter code: Glutathione peroxidase 3 (226 aa).

The N-terminal stretch at 1 to 24 (MARLLQASCLLSLLLAGFLPQSRG) is a signal peptide. The active site involves U73. U73 is a non-standard amino acid (selenocysteine).

Belongs to the glutathione peroxidase family. In terms of assembly, homotetramer. In terms of tissue distribution, expressed intensively in the kidney and adrenal gland, and weakly in the cerebellum, heart, and lung. Secreted in plasma.

The protein localises to the secreted. The enzyme catalyses 2 glutathione + H2O2 = glutathione disulfide + 2 H2O. It carries out the reaction tert-butyl hydroperoxide + 2 glutathione = tert-butanol + glutathione disulfide + H2O. Functionally, protects cells and enzymes from oxidative damage, by catalyzing the reduction of hydrogen peroxide, lipid peroxides and organic hydroperoxide, by glutathione. This is Glutathione peroxidase 3 from Macaca fuscata fuscata (Japanese macaque).